A 182-amino-acid polypeptide reads, in one-letter code: Large ribosomal subunit protein uL5 (182 aa).

This sequence belongs to the universal ribosomal protein uL5 family. Part of the 50S ribosomal subunit; part of the 5S rRNA/L5/L18/L25 subcomplex. Contacts the 5S rRNA and the P site tRNA. Forms a bridge to the 30S subunit in the 70S ribosome.

Its function is as follows. This is one of the proteins that bind and probably mediate the attachment of the 5S RNA into the large ribosomal subunit, where it forms part of the central protuberance. In the 70S ribosome it contacts protein S13 of the 30S subunit (bridge B1b), connecting the 2 subunits; this bridge is implicated in subunit movement. Contacts the P site tRNA; the 5S rRNA and some of its associated proteins might help stabilize positioning of ribosome-bound tRNAs. The sequence is that of Large ribosomal subunit protein uL5 from Coxiella burnetii (strain CbuG_Q212) (Coxiella burnetii (strain Q212)).